Here is a 117-residue protein sequence, read N- to C-terminus: Large ribosomal subunit protein bL19 (117 aa).

This sequence belongs to the bacterial ribosomal protein bL19 family.

In terms of biological role, this protein is located at the 30S-50S ribosomal subunit interface and may play a role in the structure and function of the aminoacyl-tRNA binding site. The polypeptide is Large ribosomal subunit protein bL19 (Desulfotalea psychrophila (strain LSv54 / DSM 12343)).